Consider the following 463-residue polypeptide: Metalloprotease slr0863 (463 aa).

It belongs to the peptidase U62 family.

Probable metalloprotease. This chain is Metalloprotease slr0863, found in Synechocystis sp. (strain ATCC 27184 / PCC 6803 / Kazusa).